The primary structure comprises 947 residues: Protein translocase subunit SecA 1 (947 aa).

ATP-binding positions include Gln-87, 105 to 109, and Asp-525; that span reads GEGKT. The segment at 907-937 is disordered; that stretch reads DDADKAARDPNRPETWGKVGRNEDCPCNSGK. A compositionally biased stretch (basic and acidic residues) spans 908-918; the sequence is DADKAARDPNR. Cys-931, Cys-933, Cys-942, and His-943 together coordinate Zn(2+).

The protein belongs to the SecA family. In terms of assembly, monomer and homodimer. Part of the essential Sec protein translocation apparatus which comprises SecA, SecYEG and auxiliary proteins SecDF-YajC and YidC. Requires Zn(2+) as cofactor.

It is found in the cell inner membrane. It localises to the cytoplasm. It catalyses the reaction ATP + H2O + cellular proteinSide 1 = ADP + phosphate + cellular proteinSide 2.. Its function is as follows. Part of the Sec protein translocase complex. Interacts with the SecYEG preprotein conducting channel. Has a central role in coupling the hydrolysis of ATP to the transfer of proteins into and across the cell membrane, serving both as a receptor for the preprotein-SecB complex and as an ATP-driven molecular motor driving the stepwise translocation of polypeptide chains across the membrane. This is Protein translocase subunit SecA 1 from Rhodopseudomonas palustris (strain BisA53).